A 348-amino-acid chain; its full sequence is tRNA N6-adenosine threonylcarbamoyltransferase (348 aa).

His111 and His115 together coordinate Fe cation. Substrate contacts are provided by residues 134 to 138, Asp167, Gly180, Asp184, and Asn280; that span reads LVSGG. Fe cation is bound at residue Asp308.

The protein belongs to the KAE1 / TsaD family. Requires Fe(2+) as cofactor.

The protein localises to the cytoplasm. It carries out the reaction L-threonylcarbamoyladenylate + adenosine(37) in tRNA = N(6)-L-threonylcarbamoyladenosine(37) in tRNA + AMP + H(+). In terms of biological role, required for the formation of a threonylcarbamoyl group on adenosine at position 37 (t(6)A37) in tRNAs that read codons beginning with adenine. Is involved in the transfer of the threonylcarbamoyl moiety of threonylcarbamoyl-AMP (TC-AMP) to the N6 group of A37, together with TsaE and TsaB. TsaD likely plays a direct catalytic role in this reaction. This Rippkaea orientalis (strain PCC 8801 / RF-1) (Cyanothece sp. (strain PCC 8801)) protein is tRNA N6-adenosine threonylcarbamoyltransferase.